The following is a 295-amino-acid chain: 2S seed storage protein (295 aa).

The first 20 residues, 1–20, serve as a signal peptide directing secretion; it reads MAKQIVLALAFAALVAFATA. Residues 21-161 constitute a propeptide that is removed on maturation; that stretch reads HTTIITTTIE…TITTTVTESN (141 aa). A compositionally biased stretch (polar residues) spans 195–208; sequence EQQMQQSPRSTRPY. The segment at 195 to 215 is disordered; the sequence is EQQMQQSPRSTRPYQQRPGQQ.

It belongs to the 2S seed storage albumins family. The 38 kDa precursor may be cleaved into two polypeptides of approximately the same size. The mature protein is composed of a single polypeptide containing one or more intra-molecular disulfide linkages.

This is a 2S seed storage protein. The sequence is that of 2S seed storage protein (HAG5) from Helianthus annuus (Common sunflower).